Reading from the N-terminus, the 269-residue chain is Expansin-B1 (269 aa).

Residues 1-24 (MGSLANNIMVVGAVLAALVAGGSC) form the signal peptide. The N-linked (GlcNAc...) asparagine glycan is linked to asparagine 34. An Expansin-like EG45 domain is found at 63-169 (GGACGIKNVN…RRVRCKYPAG (107 aa)). 3 disulfides stabilise this stretch: cysteine 66-cysteine 94, cysteine 97-cysteine 164, and cysteine 102-cysteine 108. The region spanning 183 to 264 (NYLAVLVKYV…NWRPDAVYTS (82 aa)) is the Expansin-like CBD domain.

It belongs to the expansin family. Expansin B subfamily. Expressed in anthers and pollen.

The protein resides in the secreted. The protein localises to the cell wall. It is found in the membrane. In terms of biological role, may aid fertilization by loosening the cell wall of the stigma and style, thereby facilitating penetration of the pollen tube. Acts selectively on grass cell walls, which are relatively poor in pectins and xyloglucans and rich in glucuronoarabinoxylans and (1-3),(1-4)-beta-D-glucans, when compared with cell walls of other angiosperms, including other monocots. The protein is Expansin-B1 (EXPB1) of Zea mays (Maize).